The primary structure comprises 716 residues: Polyribonucleotide nucleotidyltransferase (716 aa).

Mg(2+) is bound by residues aspartate 486 and aspartate 492. Residues 553–612 (PHIYNIKINPEKIKDVIGKGGAVIRALSDETDTKIDISDDGNITIAALSQKSAAFAQQRI) form the KH domain. The region spanning 622–690 (GRIYQGTVTR…RQGRIRLSIK (69 aa)) is the S1 motif domain.

It belongs to the polyribonucleotide nucleotidyltransferase family. In terms of assembly, component of the RNA degradosome, which is a multiprotein complex involved in RNA processing and mRNA degradation. Mg(2+) is required as a cofactor.

It localises to the cytoplasm. It catalyses the reaction RNA(n+1) + phosphate = RNA(n) + a ribonucleoside 5'-diphosphate. Its function is as follows. Involved in mRNA degradation. Catalyzes the phosphorolysis of single-stranded polyribonucleotides processively in the 3'- to 5'-direction. In Hamiltonella defensa subsp. Acyrthosiphon pisum (strain 5AT), this protein is Polyribonucleotide nucleotidyltransferase.